Consider the following 130-residue polypeptide: Small ribosomal subunit protein uS9 (130 aa).

Residues threonine 105–lysine 115 are compositionally biased toward basic and acidic residues. The tract at residues threonine 105–arginine 130 is disordered. The segment covering valine 116–arginine 130 has biased composition (basic residues).

This sequence belongs to the universal ribosomal protein uS9 family.

The chain is Small ribosomal subunit protein uS9 from Buchnera aphidicola subsp. Schizaphis graminum (strain Sg).